Here is a 617-residue protein sequence, read N- to C-terminus: Chaperone protein HscA homolog (617 aa).

This sequence belongs to the heat shock protein 70 family.

Chaperone involved in the maturation of iron-sulfur cluster-containing proteins. Has a low intrinsic ATPase activity which is markedly stimulated by HscB. The chain is Chaperone protein HscA homolog from Actinobacillus pleuropneumoniae serotype 5b (strain L20).